We begin with the raw amino-acid sequence, 204 residues long: Probable GTP-binding protein EngB (204 aa).

The interval 1–21 is disordered; it reads MKVSSAEFVTSGTRPAHYPPP. The region spanning 22-194 is the EngB-type G domain; the sequence is ELPEVAFAGR…WARIEVMLAA (173 aa). Residues 30 to 37, 57 to 61, 75 to 78, 142 to 145, and 173 to 175 each bind GTP; these read GRSNVGKS, GRTQL, DLPG, TKCD, and FSA. Mg(2+) contacts are provided by S37 and T59.

The protein belongs to the TRAFAC class TrmE-Era-EngA-EngB-Septin-like GTPase superfamily. EngB GTPase family. Mg(2+) is required as a cofactor.

In terms of biological role, necessary for normal cell division and for the maintenance of normal septation. This chain is Probable GTP-binding protein EngB, found in Geobacter metallireducens (strain ATCC 53774 / DSM 7210 / GS-15).